Here is a 267-residue protein sequence, read N- to C-terminus: Ribosomal RNA small subunit methyltransferase A (267 aa).

Positions 18, 20, 45, 66, 91, and 112 each coordinate S-adenosyl-L-methionine.

This sequence belongs to the class I-like SAM-binding methyltransferase superfamily. rRNA adenine N(6)-methyltransferase family. RsmA subfamily.

Its subcellular location is the cytoplasm. The enzyme catalyses adenosine(1518)/adenosine(1519) in 16S rRNA + 4 S-adenosyl-L-methionine = N(6)-dimethyladenosine(1518)/N(6)-dimethyladenosine(1519) in 16S rRNA + 4 S-adenosyl-L-homocysteine + 4 H(+). In terms of biological role, specifically dimethylates two adjacent adenosines (A1518 and A1519) in the loop of a conserved hairpin near the 3'-end of 16S rRNA in the 30S particle. May play a critical role in biogenesis of 30S subunits. In Shewanella sediminis (strain HAW-EB3), this protein is Ribosomal RNA small subunit methyltransferase A.